Here is a 128-residue protein sequence, read N- to C-terminus: MTSIVDLTPSEPALIFTGNAAAKVSELIAEEGNPALKLRVYVSGGGCSGMQYGFAFEEAVNEDDTTVEKDGVVLLVDPTSLQYLQGAEIDYQEGLEGSRFVIKNPNATSSCSCGSSFSVDGGASCSSH.

The iron-sulfur cluster site is built by Cys-47, Cys-111, and Cys-113.

Belongs to the HesB/IscA family. In terms of assembly, homodimer. Iron-sulfur cluster is required as a cofactor.

Its function is as follows. Required for insertion of 4Fe-4S clusters for at least IspG. This chain is Iron-sulfur cluster insertion protein ErpA 1, found in Methylococcus capsulatus (strain ATCC 33009 / NCIMB 11132 / Bath).